A 467-amino-acid chain; its full sequence is Glutamate--tRNA ligase 2 (467 aa).

A 'HIGH' region motif is present at residues 18–28 (PSPTGYLHVGG). The 'KMSKS' region signature appears at 238-242 (PLSKR). ATP is bound at residue K241.

Belongs to the class-I aminoacyl-tRNA synthetase family. Glutamate--tRNA ligase type 1 subfamily. Monomer.

It is found in the cytoplasm. The enzyme catalyses tRNA(Glu) + L-glutamate + ATP = L-glutamyl-tRNA(Glu) + AMP + diphosphate. Catalyzes the attachment of glutamate to tRNA(Glu) in a two-step reaction: glutamate is first activated by ATP to form Glu-AMP and then transferred to the acceptor end of tRNA(Glu). In Fervidobacterium nodosum (strain ATCC 35602 / DSM 5306 / Rt17-B1), this protein is Glutamate--tRNA ligase 2.